A 140-amino-acid chain; its full sequence is 3-hydroxyacyl-[acyl-carrier-protein] dehydratase FabZ (140 aa).

His-46 is an active-site residue.

This sequence belongs to the thioester dehydratase family. FabZ subfamily.

The protein localises to the cytoplasm. It catalyses the reaction a (3R)-hydroxyacyl-[ACP] = a (2E)-enoyl-[ACP] + H2O. Involved in unsaturated fatty acids biosynthesis. Catalyzes the dehydration of short chain beta-hydroxyacyl-ACPs and long chain saturated and unsaturated beta-hydroxyacyl-ACPs. The polypeptide is 3-hydroxyacyl-[acyl-carrier-protein] dehydratase FabZ (Pseudothermotoga lettingae (strain ATCC BAA-301 / DSM 14385 / NBRC 107922 / TMO) (Thermotoga lettingae)).